The primary structure comprises 463 residues: Glutamate--tRNA ligase 2 (463 aa).

Positions P11 to G21 match the 'HIGH' region motif. Positions K240–R244 match the 'KMSKS' region motif. K243 contributes to the ATP binding site.

Belongs to the class-I aminoacyl-tRNA synthetase family. Glutamate--tRNA ligase type 1 subfamily. In terms of assembly, monomer.

It localises to the cytoplasm. The catalysed reaction is tRNA(Glu) + L-glutamate + ATP = L-glutamyl-tRNA(Glu) + AMP + diphosphate. Catalyzes the attachment of glutamate to tRNA(Glu) in a two-step reaction: glutamate is first activated by ATP to form Glu-AMP and then transferred to the acceptor end of tRNA(Glu). In Campylobacter jejuni subsp. jejuni serotype O:2 (strain ATCC 700819 / NCTC 11168), this protein is Glutamate--tRNA ligase 2.